We begin with the raw amino-acid sequence, 484 residues long: Ornithine decarboxylase (484 aa).

N6-(pyridoxal phosphate)lysine is present on lysine 114. Residues serine 245, glycine 282, and 315 to 318 (EPGR) contribute to the pyridoxal 5'-phosphate site. 381–382 (FD) lines the substrate pocket. The active-site Proton donor; shared with dimeric partner is the cysteine 422. Aspartate 423 lines the substrate pocket. Position 452 (tyrosine 452) interacts with pyridoxal 5'-phosphate.

This sequence belongs to the Orn/Lys/Arg decarboxylase class-II family. As to quaternary structure, homodimer. Only the dimer is catalytically active, as the active sites are constructed of residues from both monomers. The cofactor is pyridoxal 5'-phosphate.

Its subcellular location is the cytoplasm. It catalyses the reaction L-ornithine + H(+) = putrescine + CO2. The protein operates within amine and polyamine biosynthesis; putrescine biosynthesis via L-ornithine pathway; putrescine from L-ornithine: step 1/1. With respect to regulation, inhibited by antizyme (AZ) OAZ1 in response to polyamine levels. AZ inhibits the assembly of the functional homodimer by binding to ODC monomers and targeting them for ubiquitin-independent proteolytic destruction by the 26S proteasome. Catalyzes the first and rate-limiting step of polyamine biosynthesis that converts ornithine into putrescine, which is the precursor for the polyamines, spermidine and spermine. Polyamines are essential for cell proliferation and are implicated in cellular processes, ranging from DNA replication to apoptosis. The protein is Ornithine decarboxylase (spe-1) of Neurospora crassa (strain ATCC 24698 / 74-OR23-1A / CBS 708.71 / DSM 1257 / FGSC 987).